Reading from the N-terminus, the 285-residue chain is NAD kinase (285 aa).

D68 functions as the Proton acceptor in the catalytic mechanism. Residues 68–69 (DG), 142–143 (ND), R153, R170, D172, and Q242 each bind NAD(+).

This sequence belongs to the NAD kinase family. It depends on a divalent metal cation as a cofactor.

Its subcellular location is the cytoplasm. The enzyme catalyses NAD(+) + ATP = ADP + NADP(+) + H(+). In terms of biological role, involved in the regulation of the intracellular balance of NAD and NADP, and is a key enzyme in the biosynthesis of NADP. Catalyzes specifically the phosphorylation on 2'-hydroxyl of the adenosine moiety of NAD to yield NADP. The polypeptide is NAD kinase (Acidobacterium capsulatum (strain ATCC 51196 / DSM 11244 / BCRC 80197 / JCM 7670 / NBRC 15755 / NCIMB 13165 / 161)).